The sequence spans 66 residues: Large ribosomal subunit protein bL35 (66 aa).

Residues 20–40 (GKIKSTQSAKRHGMTKRSKRS) are disordered. Over residues 28 to 40 (AKRHGMTKRSKRS) the composition is skewed to basic residues.

The protein belongs to the bacterial ribosomal protein bL35 family.

This Ehrlichia chaffeensis (strain ATCC CRL-10679 / Arkansas) protein is Large ribosomal subunit protein bL35.